We begin with the raw amino-acid sequence, 407 residues long: Argininosuccinate synthase (407 aa).

ATP-binding positions include 11-19 (AYSGGLDTS) and alanine 38. L-citrulline is bound by residues tyrosine 91 and serine 96. Position 121 (glycine 121) interacts with ATP. L-aspartate is bound by residues threonine 123, asparagine 127, and aspartate 128. Residue asparagine 127 participates in L-citrulline binding. 5 residues coordinate L-citrulline: arginine 131, serine 181, serine 190, glutamate 266, and tyrosine 278.

It belongs to the argininosuccinate synthase family. Type 1 subfamily. Homotetramer.

It is found in the cytoplasm. The enzyme catalyses L-citrulline + L-aspartate + ATP = 2-(N(omega)-L-arginino)succinate + AMP + diphosphate + H(+). Its pathway is amino-acid biosynthesis; L-arginine biosynthesis; L-arginine from L-ornithine and carbamoyl phosphate: step 2/3. The chain is Argininosuccinate synthase from Campylobacter concisus (strain 13826).